Here is a 448-residue protein sequence, read N- to C-terminus: Beclin-1 (448 aa).

An N-acetylmethionine modification is found at M1. S14 and S29 each carry phosphoserine. S88, S91, and S94 each carry phosphoserine; by AMPK. Residues T106–S125 carry the BH3 motif. The interaction with BCL2 and BCL2L1 stretch occupies residues L110 to C157. T117 carries the phosphothreonine; by DAPK1 modification. Residues D140 to V267 adopt a coiled-coil conformation. Residues D243–K448 form an evolutionary conserved domain (ECD) region. Glycyl lysine isopeptide (Lys-Gly) (interchain with G-Cter in ubiquitin) cross-links involve residues K400 and K435. The segment at W423–K448 is required for membrane-association.

This sequence belongs to the beclin family. In terms of assembly, a homodimeric form is proposed to exist; this metastable form readily transits to ATG14- or UVRAG-containing complexes with BECN1:UVRAG being more stable than BECN1:ATG14. Component of the PI3K (PI3KC3/PI3K-III/class III phosphatidylinositol 3-kinase) complex the core of which is composed of the catalytic subunit PIK3C3, the regulatory subunit PIK3R4 and BECN1 associating with additional regulatory/auxiliary subunits to form alternative complex forms. Alternative complex forms containing a fourth regulatory subunit in a mutually exclusive manner are PI3K complex I (PI3KC3-C1) containing ATG14, and PI3K complex II (PI3KC3-C2) containing UVRAG. PI3KC3-C1 displays a V-shaped architecture with PIK3R4 serving as a bridge between PIK3C3 and the ATG14:BECN1 subcomplex. Both, PI3KC3-C1 and PI3KC3-C2, can associate with further regulatory subunits, such as RUBCN, SH3GLB1/Bif-1 and AMBRA1. PI3KC3-C1 probably associates with PIK3CB. Forms a complex with PPP2CA and AMBRA1; AMBRA1 and BECN1 components of the complex regulate MYC stability via different pathways. Component of the complex, at least composed of LRPPRC, BECN1 and BCL2; the interactions prevent BECN1 from forming an autophagy-inducing complex with PIK3C3. Interacts with AMBRA1, GOPC, GRID2. Interacts with BCL2 and BCL2L1 isoform Bcl-X(L); the interaction inhibits BECN1 function in promoting autophagy by interfering with the formation of the PI3K complex. Interacts with cytosolic HMGB1; inhibits the interaction of BECN1 and BCL2 leading to promotion of autophagy. Interacts with USP10, USP13, VMP1, DAPK1, RAB39A. Interacts with the poly-Gln domain of ATXN3; the interaction causes deubiquitination at Lys-400 and stabilizes BECN1. Interacts with SLAMF1. Interacts with TRIM5; the interaction causes activation of BECN1 by causing its dissociation from its inhibitors BCL2 and TAB2. Interacts with active ULK1 (phosphorylated on 'Ser-317') and MEFV simultaneously. Interacts with WDR81 and WDR91; negatively regulates the PI3 kinase/PI3K activity associated with endosomal membranes. Interacts with LAPTM4B; competes with EGFR for LAPTM4B binding; regulates EGFR activity. Interacts with TRIM50. Interacts with TRIM16. Interacts with ATG14; this interaction is increased in the absence of TMEM39A. Interacts with WASHC1; preventing interaction with AMBRA1 and the DCX(AMBRA1) complex and subsequent ubiquitination. Interacts with TRIM17. Interacts with BCL2L10/BCL-B (via BH1 domain). Interacts with SH3BGRL. Interacts with IRGM; enhancing BECN1-interacting partners and influencing the composition of the BECN1 complex. Interacts with ARMC3. Interacts with LRPPRC. (Microbial infection) Interacts with African swine fever virus (ASFV) apoptosis regulator Bcl-2 homolog; this interaction allows the virus to inhibit BECN1, and thus autophagy. Post-translationally, phosphorylation at Thr-117 by DAPK1 reduces its interaction with BCL2 and BCL2L1 and promotes induction of autophagy. In response to autophagic stimuli, phosphorylated at serine residues by AMPK in an ATG14-dependent manner, and this phosphorylation is critical for maximally efficient autophagy. Polyubiquitinated by NEDD4, both with 'Lys-11'- and 'Lys-63'-linkages. 'Lys-11'-linked polyubiquitination leads to degradation and is enhanced when the stabilizing interaction partner VPS34 is depleted. Deubiquitinated by USP10 and USP13, leading to stabilize the PIK3C3/VPS34-containing complexes. Polyubiquitinated at Lys-400 with 'Lys-48'-linkages. 'Lys-48'-linked polyubiquitination of Lys-400 leads to degradation. Deubiquitinated by ATXN3, leading to stabilization. Ubiquitinated at Lys-435 via 'Lys-63'-linkage by the DCX(AMBRA1) complex, thereby increasing the association between BECN1 and PIK3C3 to promote PIK3C3 activity. 'Lys-48'-linked ubiquitination by RNF216 leads to proteasomal degradation and autophagy inhibition. In terms of processing, proteolytically processed by caspases including CASP8 and CASP3; the C-terminal fragments lack autophagy-inducing capacity and are proposed to induce apoptosis. Thus the cleavage is proposed to be an determinant to switch from autophagy to apoptosis pathways affecting cellular homeostasis including viral infections and survival of tumor cells.

Its subcellular location is the cytoplasm. It localises to the golgi apparatus. It is found in the trans-Golgi network membrane. The protein resides in the endosome membrane. The protein localises to the endoplasmic reticulum membrane. Its subcellular location is the mitochondrion membrane. It localises to the cytoplasmic vesicle. It is found in the autophagosome. The protein resides in the mitochondrion. The protein localises to the nucleus. In terms of biological role, plays a central role in autophagy. Acts as a core subunit of the PI3K complex that mediates formation of phosphatidylinositol 3-phosphate; different complex forms are believed to play a role in multiple membrane trafficking pathways: PI3KC3-C1 is involved in initiation of autophagosomes and PI3KC3-C2 in maturation of autophagosomes and endocytosis. Involved in regulation of degradative endocytic trafficking and required for the abscission step in cytokinesis, probably in the context of PI3KC3-C2. Essential for the formation of PI3KC3-C2 but not PI3KC3-C1 PI3K complex forms. Involved in endocytosis. May play a role in antiviral host defense. Beclin-1-C 35 kDa localized to mitochondria can promote apoptosis; it induces the mitochondrial translocation of BAX and the release of proapoptotic factors. In Sus scrofa (Pig), this protein is Beclin-1 (BECN1).